The primary structure comprises 314 residues: Acetyl-coenzyme A carboxylase carboxyl transferase subunit alpha (314 aa).

Residues glutamate 32 to glutamate 289 form the CoA carboxyltransferase C-terminal domain.

Belongs to the AccA family. As to quaternary structure, acetyl-CoA carboxylase is a heterohexamer composed of biotin carboxyl carrier protein (AccB), biotin carboxylase (AccC) and two subunits each of ACCase subunit alpha (AccA) and ACCase subunit beta (AccD).

It localises to the cytoplasm. The enzyme catalyses N(6)-carboxybiotinyl-L-lysyl-[protein] + acetyl-CoA = N(6)-biotinyl-L-lysyl-[protein] + malonyl-CoA. The protein operates within lipid metabolism; malonyl-CoA biosynthesis; malonyl-CoA from acetyl-CoA: step 1/1. Component of the acetyl coenzyme A carboxylase (ACC) complex. First, biotin carboxylase catalyzes the carboxylation of biotin on its carrier protein (BCCP) and then the CO(2) group is transferred by the carboxyltransferase to acetyl-CoA to form malonyl-CoA. The polypeptide is Acetyl-coenzyme A carboxylase carboxyl transferase subunit alpha (Staphylococcus saprophyticus subsp. saprophyticus (strain ATCC 15305 / DSM 20229 / NCIMB 8711 / NCTC 7292 / S-41)).